The sequence spans 201 residues: Small ribosomal subunit protein uS4c (201 aa).

Residues 20–44 (GLTSKRPRAGSDLRNQSRSGKKSQY) are disordered. Positions 89 to 152 (MRLDNTLFRL…NSRTLVQNLL (64 aa)) constitute an S4 RNA-binding domain.

This sequence belongs to the universal ribosomal protein uS4 family. Part of the 30S ribosomal subunit. Contacts protein S5. The interaction surface between S4 and S5 is involved in control of translational fidelity.

It localises to the plastid. Its subcellular location is the chloroplast. Its function is as follows. One of the primary rRNA binding proteins, it binds directly to 16S rRNA where it nucleates assembly of the body of the 30S subunit. In terms of biological role, with S5 and S12 plays an important role in translational accuracy. The sequence is that of Small ribosomal subunit protein uS4c (rps4) from Aethionema grandiflorum (Persian stone-cress).